The sequence spans 264 residues: Thymidylate synthase (264 aa).

Residue R21 participates in dUMP binding. Residue H51 coordinates (6R)-5,10-methylene-5,6,7,8-tetrahydrofolate. Residue 126 to 127 (RR) participates in dUMP binding. Residue C146 is the Nucleophile of the active site. Residues 166 to 169 (RSAD), N177, and 207 to 209 (HLY) each bind dUMP. D169 is a binding site for (6R)-5,10-methylene-5,6,7,8-tetrahydrofolate. S263 contacts (6R)-5,10-methylene-5,6,7,8-tetrahydrofolate.

The protein belongs to the thymidylate synthase family. Bacterial-type ThyA subfamily. Homodimer.

It localises to the cytoplasm. It carries out the reaction dUMP + (6R)-5,10-methylene-5,6,7,8-tetrahydrofolate = 7,8-dihydrofolate + dTMP. It participates in pyrimidine metabolism; dTTP biosynthesis. In terms of biological role, catalyzes the reductive methylation of 2'-deoxyuridine-5'-monophosphate (dUMP) to 2'-deoxythymidine-5'-monophosphate (dTMP) while utilizing 5,10-methylenetetrahydrofolate (mTHF) as the methyl donor and reductant in the reaction, yielding dihydrofolate (DHF) as a by-product. This enzymatic reaction provides an intracellular de novo source of dTMP, an essential precursor for DNA biosynthesis. In Neisseria meningitidis serogroup A / serotype 4A (strain DSM 15465 / Z2491), this protein is Thymidylate synthase.